A 329-amino-acid polypeptide reads, in one-letter code: BRISC and BRCA1-A complex member 1 (329 aa).

Methionine 1 is modified (N-acetylmethionine). The disordered stretch occupies residues 1 to 84 (MEVAEPSSPT…VPPPAPEVQI (84 aa)). Serine 8 carries the post-translational modification Phosphoserine. The span at 10-19 (TEEEEEEEEH) shows a compositional bias: acidic residues. A phosphoserine mark is found at serine 29, serine 49, serine 57, and serine 62. Threonine 65 bears the Phosphothreonine mark. Serine 66 carries the phosphoserine modification. Residues 95 to 298 (VIICLDLSEE…LELHNCMAKL (204 aa)) form a VWFA-like region.

This sequence belongs to the BABAM1 family. As to quaternary structure, component of the ARISC complex, at least composed of UIMC1/RAP80, ABRAXAS1, BRCC3/BRCC36, BABAM2 and BABAM1/NBA1. Component of the BRCA1-A complex, at least composed of BRCA1, BARD1, UIMC1/RAP80, ABRAXAS1, BRCC3/BRCC36, BABAM2 and BABAM1/NBA1. In the BRCA1-A complex, interacts directly with ABRAXAS1 and BABAM2. Component of the BRISC complex, at least composed of ABRAXAS2, BRCC3/BRCC36, BABAM2 and BABAM1/NBA1. Identified in a complex with SHMT2 and the other subunits of the BRISC complex.

Its subcellular location is the cytoplasm. The protein localises to the nucleus. In terms of biological role, component of the BRCA1-A complex, a complex that specifically recognizes 'Lys-63'-linked ubiquitinated histones H2A and H2AX at DNA lesions sites, leading to target the BRCA1-BARD1 heterodimer to sites of DNA damage at double-strand breaks (DSBs). The BRCA1-A complex also possesses deubiquitinase activity that specifically removes 'Lys-63'-linked ubiquitin on histones H2A and H2AX. In the BRCA1-A complex, it is required for the complex integrity and its localization at DSBs. Component of the BRISC complex, a multiprotein complex that specifically cleaves 'Lys-63'-linked ubiquitin in various substrates. In these 2 complexes, it is probably required to maintain the stability of BABAM2 and help the 'Lys-63'-linked deubiquitinase activity mediated by BRCC3/BRCC36 component. The BRISC complex is required for normal mitotic spindle assembly and microtubule attachment to kinetochores via its role in deubiquitinating NUMA1. Plays a role in interferon signaling via its role in the deubiquitination of the interferon receptor IFNAR1; deubiquitination increases IFNAR1 activity by enhancing its stability and cell surface expression. Down-regulates the response to bacterial lipopolysaccharide (LPS) via its role in IFNAR1 deubiquitination. The chain is BRISC and BRCA1-A complex member 1 (BABAM1) from Homo sapiens (Human).